The primary structure comprises 262 residues: Dimeric xanthone biosynthesis cluster protein R11 (262 aa).

The interval 69 to 160 is hemerythrin-like; it reads IADLLFYTKT…PQLFKHLNDE (92 aa).

The protein operates within secondary metabolite biosynthesis. Part of the gene cluster that mediates the biosynthesis of the dimeric xanthones cryptosporioptides. The pathway begins with the synthesis of atrochrysone thioester by the polyketide synthase dmx-nrPKS. The atrochrysone carboxyl ACP thioesterase dmxR1 then breaks the thioester bond and releases the atrochrysone carboxylic acid from dmx-nrPKS. Atrochrysone carboxylic acid is decarboxylated by the decarboxylase dmxR15, and oxidized by the anthrone oxygenase dmxR16 to yield emodin. Emodin is then reduced to emodin hydroquinone by the oxidoreductase dmxR7. A-ring reduction by the short chain dehydrogenase dmxR18, dehydration by the scytalone dehydratase-like protein dmxR17 and probable spontaneous re-oxidation, results in overall deoxygenation to chrysophanol. Baeyer-Villiger oxidation by the Baeyer-Villiger monooxygenase (BVMO) dmxR6 then yields monodictylactone in equilibrium with monodictyphenone. In the case of the cryptosporioptides biosynthesis, monodictylactone is reduced at C-12 to an alcohol (by the short chain dehydrogenases dmxR12 or dmxR8) and hydroxylated at C-5 by dmxR9, yielding the electron-rich aromatic which could eliminate H(2)O to form the ortho-quinonemethide, followed by tautomerisation to paraquinone and complete the formal reduction to produce the 10-methylgroup. Conjugate addition of C-4a-OH to the resulting paraquinone by the monooxygenase dmxR10 then gives cyclohexadienone, which is then reduced at C-5 by the short chain dehydrogenase dmxR3 to give the dihydroxanthone. The 6,7-epoxide in the cryptosporioptides could be introduced by the cytochrome P450 monooxygenase dmxL3. The highly reducing PKS dmxL2 manufactures butyrate, which is further carboxylated by dmxL1 to form ethylmalonate. It is not yet clear whether the carboxylation occurs while the butyrate is attached to the ACP of dmxL2, but this unusual fungal metabolite could then be esterified to O-5 by the O-acetyltransferase dmxR13. Finally, dimerization performed by dmxR5 gives the observed dimers cryptosporioptides A, B and C as the final products of the pathway. The polypeptide is Dimeric xanthone biosynthesis cluster protein R11 (Cryptosporiopsis sp. (strain 8999)).